We begin with the raw amino-acid sequence, 358 residues long: Homoserine O-acetyltransferase (358 aa).

An AB hydrolase-1 domain is found at 41–343; it reads NAVLICHALT…DYGHDAFLVD (303 aa). The active-site Nucleophile is the Ser-143. Arg-212 contributes to the substrate binding site. Catalysis depends on residues Asp-304 and His-337. Asp-338 serves as a coordination point for substrate.

The protein belongs to the AB hydrolase superfamily. MetX family. As to quaternary structure, homodimer.

Its subcellular location is the cytoplasm. It carries out the reaction L-homoserine + acetyl-CoA = O-acetyl-L-homoserine + CoA. Its pathway is amino-acid biosynthesis; L-methionine biosynthesis via de novo pathway; O-acetyl-L-homoserine from L-homoserine: step 1/1. In terms of biological role, transfers an acetyl group from acetyl-CoA to L-homoserine, forming acetyl-L-homoserine. The polypeptide is Homoserine O-acetyltransferase (Haemophilus influenzae (strain 86-028NP)).